The following is a 274-amino-acid chain: HTH-type transcriptional regulator GadX (274 aa).

The HTH araC/xylS-type domain maps to 145–242; it reads TRVCTVINNN…GMTPTEYQER (98 aa). DNA-binding regions (H-T-H motif) lie at residues 162–183 and 209–232; these read ARIA…REEE and IKRV…RNYY.

Homodimer.

Functionally, positively regulates the expression of about fifteen genes involved in acid resistance such as gadA, gadB and gadC. Depending on the conditions (growth phase and medium), can repress gadW. This chain is HTH-type transcriptional regulator GadX (gadX), found in Escherichia coli O157:H7.